The sequence spans 262 residues: tRNA pseudouridine synthase A (262 aa).

Catalysis depends on aspartate 51, which acts as the Nucleophile. Tyrosine 109 is a substrate binding site.

The protein belongs to the tRNA pseudouridine synthase TruA family. As to quaternary structure, homodimer.

The enzyme catalyses uridine(38/39/40) in tRNA = pseudouridine(38/39/40) in tRNA. Formation of pseudouridine at positions 38, 39 and 40 in the anticodon stem and loop of transfer RNAs. This chain is tRNA pseudouridine synthase A, found in Aliivibrio salmonicida (strain LFI1238) (Vibrio salmonicida (strain LFI1238)).